Reading from the N-terminus, the 501-residue chain is Lysine--tRNA ligase (501 aa).

Positions 404 and 411 each coordinate Mg(2+).

Belongs to the class-II aminoacyl-tRNA synthetase family. Homodimer. The cofactor is Mg(2+).

Its subcellular location is the cytoplasm. It catalyses the reaction tRNA(Lys) + L-lysine + ATP = L-lysyl-tRNA(Lys) + AMP + diphosphate. In Campylobacter jejuni subsp. jejuni serotype O:6 (strain 81116 / NCTC 11828), this protein is Lysine--tRNA ligase.